We begin with the raw amino-acid sequence, 219 residues long: 7-cyano-7-deazaguanine synthase (219 aa).

Position 8 to 18 (8 to 18 (LSGGMDSAVLL)) interacts with ATP. Residues C185, C193, C196, and C199 each coordinate Zn(2+).

This sequence belongs to the QueC family. The cofactor is Zn(2+).

The catalysed reaction is 7-carboxy-7-deazaguanine + NH4(+) + ATP = 7-cyano-7-deazaguanine + ADP + phosphate + H2O + H(+). It functions in the pathway purine metabolism; 7-cyano-7-deazaguanine biosynthesis. Catalyzes the ATP-dependent conversion of 7-carboxy-7-deazaguanine (CDG) to 7-cyano-7-deazaguanine (preQ(0)). The polypeptide is 7-cyano-7-deazaguanine synthase (Desulfotalea psychrophila (strain LSv54 / DSM 12343)).